A 296-amino-acid chain; its full sequence is Light-independent protochlorophyllide reductase iron-sulfur ATP-binding protein (296 aa).

Residues 39–44 (GIGKST) and K68 each bind ATP. S43 is a Mg(2+) binding site. Residues C124 and C158 each coordinate [4Fe-4S] cluster. 209 to 210 (NR) is an ATP binding site.

Belongs to the NifH/BchL/ChlL family. As to quaternary structure, homodimer. Protochlorophyllide reductase is composed of three subunits; ChlL, ChlN and ChlB. [4Fe-4S] cluster serves as cofactor.

It carries out the reaction chlorophyllide a + oxidized 2[4Fe-4S]-[ferredoxin] + 2 ADP + 2 phosphate = protochlorophyllide a + reduced 2[4Fe-4S]-[ferredoxin] + 2 ATP + 2 H2O. Its pathway is porphyrin-containing compound metabolism; chlorophyll biosynthesis (light-independent). Functionally, component of the dark-operative protochlorophyllide reductase (DPOR) that uses Mg-ATP and reduced ferredoxin to reduce ring D of protochlorophyllide (Pchlide) to form chlorophyllide a (Chlide). This reaction is light-independent. The L component serves as a unique electron donor to the NB-component of the complex, and binds Mg-ATP. The protein is Light-independent protochlorophyllide reductase iron-sulfur ATP-binding protein of Prochlorococcus marinus (strain MIT 9303).